Reading from the N-terminus, the 501-residue chain is MALGALLLILGILGTPLAPGARGSEAEGQLLKKLFSDYDSSVRPAQEVGDRVGVSIGLTLAQLISLNEKDEEMSTKVYLDLEWTDYRLSWDPAEHDGIESLRVTAESVWLPDVVLLNNNDGNFDVALDINVVVSFEGSVRWQPPGLYRSSCSIQVTYFPFDWQNCTMVFSSYSYDSSEVSLKTGPDPDGQERQEIYIHEGTFIENGQWEIIHKPSRLIHLPGDRRGGKEGHREEVIFYLIIRRKPLFYLVNVIAPCILITLLAIFVFYLPPDAGEKMGLSIFALLTLTVFLLLLADKVPETSLAVPIIIKYLMFTMILVTFSVILSVVVLNLHHRSPHTHQMPFWVRQIFIHKLPPYLGLKRPKPERDQLPEPHHSFSPRSGWGRGTDEYFIRKPPCDFLFPKLNRFQPESPAPDLRRFIDGPPRAVGLPQELREVISSISYMARQLQEQEDHDALKEDWQFVAMVVDRLFLWTFIVFTSVGTLVIFLDATYHLPPPEPFP.

The signal sequence occupies residues 1–23; that stretch reads MALGALLLILGILGTPLAPGARG. The Extracellular portion of the chain corresponds to 24-244; sequence SEAEGQLLKK…VIFYLIIRRK (221 aa). Cysteine 151 and cysteine 165 are oxidised to a cystine. Asparagine 164 carries N-linked (GlcNAc...) asparagine glycosylation. A run of 3 helical transmembrane segments spans residues 245 to 269, 277 to 295, and 311 to 332; these read PLFY…VFYL, MGLS…LLLA, and YLMF…VLNL. Residues 333 to 469 are Cytoplasmic-facing; sequence HHRSPHTHQM…WQFVAMVVDR (137 aa). The interval 362–381 is disordered; the sequence is RPKPERDQLPEPHHSFSPRS. Basic and acidic residues predominate over residues 363–375; the sequence is PKPERDQLPEPHH. At tyrosine 390 the chain carries Phosphotyrosine; by Tyr-kinases. Residues 470 to 488 traverse the membrane as a helical segment; it reads LFLWTFIVFTSVGTLVIFL.

Belongs to the ligand-gated ion channel (TC 1.A.9) family. Acetylcholine receptor (TC 1.A.9.1) subfamily. Beta-1/CHRNB1 sub-subfamily. Pentamer of two alpha chains, and one each of the beta, delta, and gamma (in immature muscle) or epsilon (in mature muscle) chains. The muscle heteropentamer composed of alpha-1, beta-1, delta, epsilon subunits interacts with the alpha-conotoxin ImII.

The protein localises to the postsynaptic cell membrane. The protein resides in the cell membrane. It carries out the reaction K(+)(in) = K(+)(out). The catalysed reaction is Na(+)(in) = Na(+)(out). In terms of biological role, after binding acetylcholine, the AChR responds by an extensive change in conformation that affects all subunits and leads to opening of an ion-conducting channel across the plasma membrane. This Rattus norvegicus (Rat) protein is Acetylcholine receptor subunit beta (Chrnb1).